The primary structure comprises 596 residues: DNA mismatch repair protein MutL (596 aa).

It belongs to the DNA mismatch repair MutL/HexB family.

Functionally, this protein is involved in the repair of mismatches in DNA. It is required for dam-dependent methyl-directed DNA mismatch repair. May act as a 'molecular matchmaker', a protein that promotes the formation of a stable complex between two or more DNA-binding proteins in an ATP-dependent manner without itself being part of a final effector complex. The chain is DNA mismatch repair protein MutL from Leptospira borgpetersenii serovar Hardjo-bovis (strain JB197).